Reading from the N-terminus, the 53-residue chain is Beta-defensin C7 (53 aa).

3 cysteine pairs are disulfide-bonded: Cys-20–Cys-49, Cys-27–Cys-42, and Cys-32–Cys-50.

It belongs to the beta-defensin family.

The protein resides in the secreted. In terms of biological role, has bactericidal activity. This Bos taurus (Bovine) protein is Beta-defensin C7.